The primary structure comprises 457 residues: G-protein coupled receptor 135 (457 aa).

The disordered stretch occupies residues 1–27; that stretch reads MEEQARPPSRPAASATLPGSAHPGGAA. Over 1–64 the chain is Extracellular; the sequence is MEEQARPPSR…EAAGSRGPAP (64 aa). N47 carries an N-linked (GlcNAc...) asparagine glycan. Residues 65-85 form a helical membrane-spanning segment; it reads LLWHGAAVAAQALVLLLIFLL. Topologically, residues 86–109 are cytoplasmic; the sequence is SSLGNCAVMGVIVKHRQLRTVTNA. Residues 110-130 form a helical membrane-spanning segment; that stretch reads FILSLSLSDLLTALLCLPAAF. The Extracellular portion of the chain corresponds to 131–156; it reads LDLFAPPGDSGPWRSFCAASRFFSSC. The helical transmembrane segment at 157-177 threads the bilayer; the sequence is FGIVSTFSVALISLDRYCAIV. Residues 178–189 lie on the Cytoplasmic side of the membrane; the sequence is RPPRDKLGRRRA. The chain crosses the membrane as a helical span at residues 190 to 210; that stretch reads LQLLAGAWLAALGFSLPWELL. Residues 211-235 lie on the Extracellular side of the membrane; it reads RAPREPPTPQSFHRCLYRTSPDPAQ. A helical transmembrane segment spans residues 236-256; it reads LGAAYSVGLVVACYLLPFLLM. At 257–295 the chain is on the cytoplasmic side; sequence CFCRYHICKTVRLSDVRVRPMTTYARVLRFFSEVRTATT. Residues 296 to 316 traverse the membrane as a helical segment; the sequence is VLIMIVFVICCWGPYCFLVLL. The Extracellular portion of the chain corresponds to 317–329; sequence AATRQGQTTQAPS. The chain crosses the membrane as a helical span at residues 330 to 350; it reads LLNVAAVWLTWANGAINPVIY. Topologically, residues 351-457 are cytoplasmic; sequence AIRNPNISMF…HKSETRDSSI (107 aa).

Belongs to the G-protein coupled receptor 1 family. As to quaternary structure, interacts with MTNR1B. Interacts with ARRB1 and ARRB2 in a spontaneous and agonist-independent manner; leading to the internalization of GPR135 in the endosomal compartment.

The protein localises to the cell membrane. Its subcellular location is the endosome membrane. In terms of biological role, orphan receptor. Has spontaneous activity for beta-arrestin recruitment. Shows a reciprocal regulatory interaction with the melatonin receptor MTNR1B most likely through receptor heteromerization. The protein is G-protein coupled receptor 135 (Gpr135) of Rattus norvegicus (Rat).